A 357-amino-acid polypeptide reads, in one-letter code: Vomeronasal type-1 receptor 5 (357 aa).

The Extracellular portion of the chain corresponds to 1–3 (MLK). A helical membrane pass occupies residues 4–24 (LVIIENMAEIMLFSLDLLLFS). The Cytoplasmic segment spans residues 25 to 52 (TDILCFNFPSKMIKLPGFITIQIFFYPQ). The helical transmembrane segment at 53-73 (ASFGISANTILFLFHIFTFVF) threads the bilayer. Residues 74 to 81 (SHRSKSID) lie on the Extracellular side of the membrane. A helical membrane pass occupies residues 82–102 (MIISHLSLIHILLLFTQAILV). Residues 103–130 (SLDFFGSQNTQDDLRCKVIVFLNKVMRG) lie on the Cytoplasmic side of the membrane. A helical membrane pass occupies residues 131–151 (LSICTPCLLNVLQAIISPSIF). The Extracellular portion of the chain corresponds to 152–163 (SLAKLKHPSASH). The helical transmembrane segment at 164–184 (ILGFFLFSWVLNMFIGVIFCC) threads the bilayer. The Cytoplasmic segment spans residues 185–269 (TLWLPPVKWG…PVSPVKRASQ (85 aa)). Residues 270–290 (TILLLVSFVFIYWVDFMFSFS) traverse the membrane as a helical segment. The Extracellular segment spans residues 291–300 (RGVTWINDSL). The N-linked (GlcNAc...) asparagine glycan is linked to Asn-297. A helical membrane pass occupies residues 301–321 (LVWFQVIVANSYATISPLMLI). Residues 322–357 (YADNQIFKTLQMLWFKYLSPPKLMLKFNRQCGSTKK) lie on the Cytoplasmic side of the membrane.

The protein belongs to the G-protein coupled receptor 1 family.

It is found in the cell membrane. Its function is as follows. Putative pheromone receptor. In Gorilla gorilla gorilla (Western lowland gorilla), this protein is Vomeronasal type-1 receptor 5 (VN1R5).